The following is a 267-amino-acid chain: MNALLSNPFKEGLRKGDTQIGLWLSSTTSYMAEIAATSGYDWLLIDGEHAPNTVQDLYHQLQAIAPYASQPVIRPIEGSKALIKQVLDIGAQTLLIPMVDTAEQARQVVSATRYPPLGQRGVGASVARAARWGRIDNYMAQANESLCLLVQVESKVALENLDAILEVEGIDGVFIGPADLSASLGYPDNAGHPEVQRIIESCIYRIRAAGKAAGFLAVDPAMAQKCLAWGANFVAVGVDTMLYTEALDSRLAMFKSVQSVSTAKRSY.

Catalysis depends on histidine 49, which acts as the Proton acceptor. Glutamine 151 is a binding site for substrate. Glutamate 153 is a binding site for Mg(2+). Substrate-binding residues include alanine 178 and aspartate 179. Aspartate 179 serves as a coordination point for Mg(2+).

This sequence belongs to the HpcH/HpaI aldolase family. KDR aldolase subfamily. As to quaternary structure, homohexamer. Mg(2+) is required as a cofactor.

It carries out the reaction 2-dehydro-3-deoxy-L-rhamnonate = (S)-lactaldehyde + pyruvate. Its function is as follows. Catalyzes the reversible retro-aldol cleavage of 2-keto-3-deoxy-L-rhamnonate (KDR) to pyruvate and lactaldehyde. The polypeptide is 2-keto-3-deoxy-L-rhamnonate aldolase (Salmonella enteritidis PT4 (strain P125109)).